Consider the following 258-residue polypeptide: Imidazole glycerol phosphate synthase subunit HisF (258 aa).

Residues Asp-11 and Asp-130 contribute to the active site.

This sequence belongs to the HisA/HisF family. Heterodimer of HisH and HisF.

It is found in the cytoplasm. The enzyme catalyses 5-[(5-phospho-1-deoxy-D-ribulos-1-ylimino)methylamino]-1-(5-phospho-beta-D-ribosyl)imidazole-4-carboxamide + L-glutamine = D-erythro-1-(imidazol-4-yl)glycerol 3-phosphate + 5-amino-1-(5-phospho-beta-D-ribosyl)imidazole-4-carboxamide + L-glutamate + H(+). Its pathway is amino-acid biosynthesis; L-histidine biosynthesis; L-histidine from 5-phospho-alpha-D-ribose 1-diphosphate: step 5/9. IGPS catalyzes the conversion of PRFAR and glutamine to IGP, AICAR and glutamate. The HisF subunit catalyzes the cyclization activity that produces IGP and AICAR from PRFAR using the ammonia provided by the HisH subunit. In Methylorubrum extorquens (strain CM4 / NCIMB 13688) (Methylobacterium extorquens), this protein is Imidazole glycerol phosphate synthase subunit HisF.